The chain runs to 81 residues: WAP four-disulfide core domain protein 13 (81 aa).

The first 22 residues, 1-22 (MRPVSPLQLLLVLSLAPQPVLG), serve as a signal peptide directing secretion. The WAP domain maps to 31-74 (YILEPPPCRSEPGACNMFCTQQEECPEPLQCCSAYCGIVCTSNQ). 4 disulfide bridges follow: C38-C62, C45-C66, C49-C61, and C55-C70.

It localises to the secreted. Its function is as follows. Putative acid-stable proteinase inhibitor. This chain is WAP four-disulfide core domain protein 13 (Wfdc13), found in Mus musculus (Mouse).